The primary structure comprises 514 residues: Putative thymidine phosphorylase (514 aa).

This sequence belongs to the thymidine/pyrimidine-nucleoside phosphorylase family. Type 2 subfamily.

It carries out the reaction thymidine + phosphate = 2-deoxy-alpha-D-ribose 1-phosphate + thymine. In Sphingopyxis alaskensis (strain DSM 13593 / LMG 18877 / RB2256) (Sphingomonas alaskensis), this protein is Putative thymidine phosphorylase.